Here is a 202-residue protein sequence, read N- to C-terminus: LexA repressor (202 aa).

A DNA-binding region (H-T-H motif) is located at residues 29–49 (VREICEATGLKSTSTVHGHLT). Residues Ser-126 and Lys-163 each act as for autocatalytic cleavage activity in the active site.

Belongs to the peptidase S24 family. Homodimer.

It catalyses the reaction Hydrolysis of Ala-|-Gly bond in repressor LexA.. Represses a number of genes involved in the response to DNA damage (SOS response), including recA and lexA. In the presence of single-stranded DNA, RecA interacts with LexA causing an autocatalytic cleavage which disrupts the DNA-binding part of LexA, leading to derepression of the SOS regulon and eventually DNA repair. This Caldicellulosiruptor saccharolyticus (strain ATCC 43494 / DSM 8903 / Tp8T 6331) protein is LexA repressor.